The chain runs to 309 residues: Electron transfer flavoprotein subunit alpha (309 aa).

Position 253–281 (253–281) interacts with FAD; the sequence is LYIAVGISGAIQHLAGMKDSKVIVAINKD.

Belongs to the ETF alpha-subunit/FixB family. As to quaternary structure, heterodimer of an alpha and a beta subunit. It depends on FAD as a cofactor.

Functionally, the electron transfer flavoprotein serves as a specific electron acceptor for other dehydrogenases. It transfers the electrons to the main respiratory chain via ETF-ubiquinone oxidoreductase (ETF dehydrogenase). In Pseudomonas aeruginosa (strain ATCC 15692 / DSM 22644 / CIP 104116 / JCM 14847 / LMG 12228 / 1C / PRS 101 / PAO1), this protein is Electron transfer flavoprotein subunit alpha (etfA).